The chain runs to 476 residues: Ribulose bisphosphate carboxylase large chain (476 aa).

The propeptide occupies 1-2 (MS). Pro-3 bears the N-acetylproline mark. Lys-14 carries the post-translational modification N6,N6,N6-trimethyllysine. Substrate is bound by residues Asn-123 and Thr-173. Lys-175 functions as the Proton acceptor in the catalytic mechanism. Position 177 (Lys-177) interacts with substrate. Residues Lys-201, Asp-203, and Glu-204 each coordinate Mg(2+). Lys-201 carries the N6-carboxylysine modification. Residue His-294 is the Proton acceptor of the active site. Residues Arg-295, His-327, and Ser-379 each coordinate substrate.

It belongs to the RuBisCO large chain family. Type I subfamily. As to quaternary structure, heterohexadecamer of 8 large chains and 8 small chains; disulfide-linked. The disulfide link is formed within the large subunit homodimers. It depends on Mg(2+) as a cofactor. In terms of processing, the disulfide bond which can form in the large chain dimeric partners within the hexadecamer appears to be associated with oxidative stress and protein turnover.

Its subcellular location is the plastid. It is found in the chloroplast. It catalyses the reaction 2 (2R)-3-phosphoglycerate + 2 H(+) = D-ribulose 1,5-bisphosphate + CO2 + H2O. The catalysed reaction is D-ribulose 1,5-bisphosphate + O2 = 2-phosphoglycolate + (2R)-3-phosphoglycerate + 2 H(+). RuBisCO catalyzes two reactions: the carboxylation of D-ribulose 1,5-bisphosphate, the primary event in carbon dioxide fixation, as well as the oxidative fragmentation of the pentose substrate in the photorespiration process. Both reactions occur simultaneously and in competition at the same active site. The polypeptide is Ribulose bisphosphate carboxylase large chain (Arenaria drummondii (Drummond sandwort)).